Reading from the N-terminus, the 185-residue chain is uncharacterized protein (185 aa).

This is an uncharacterized protein from Acanthamoeba polyphaga (Amoeba).